Consider the following 362-residue polypeptide: Phosphoserine aminotransferase (362 aa).

Residues S9 and R42 each contribute to the L-glutamate site. Residues 76–77, W102, T153, D174, and Q197 each bind pyridoxal 5'-phosphate; that span reads GR. K198 bears the N6-(pyridoxal phosphate)lysine mark. 239–240 contacts pyridoxal 5'-phosphate; it reads NT.

The protein belongs to the class-V pyridoxal-phosphate-dependent aminotransferase family. SerC subfamily. Homodimer. The cofactor is pyridoxal 5'-phosphate.

Its subcellular location is the cytoplasm. It carries out the reaction O-phospho-L-serine + 2-oxoglutarate = 3-phosphooxypyruvate + L-glutamate. The catalysed reaction is 4-(phosphooxy)-L-threonine + 2-oxoglutarate = (R)-3-hydroxy-2-oxo-4-phosphooxybutanoate + L-glutamate. The protein operates within amino-acid biosynthesis; L-serine biosynthesis; L-serine from 3-phospho-D-glycerate: step 2/3. It participates in cofactor biosynthesis; pyridoxine 5'-phosphate biosynthesis; pyridoxine 5'-phosphate from D-erythrose 4-phosphate: step 3/5. Functionally, catalyzes the reversible conversion of 3-phosphohydroxypyruvate to phosphoserine and of 3-hydroxy-2-oxo-4-phosphonooxybutanoate to phosphohydroxythreonine. This is Phosphoserine aminotransferase from Escherichia coli O127:H6 (strain E2348/69 / EPEC).